Reading from the N-terminus, the 485-residue chain is L-ornithine N(5)-oxygenase (485 aa).

FAD contacts are provided by residues 49–57 (ERQQQFVWH) and Q68. K73 contributes to the L-ornithine binding site. Residue V134 coordinates FAD. Position 243 (R243) interacts with NADP(+). L-ornithine-binding positions include 257-260 (NEIF) and N287. An NADP(+)-binding site is contributed by 287–289 (NYS). Residue 425–427 (TLL) participates in FAD binding. S428 lines the L-ornithine pocket.

The protein belongs to the lysine N(6)-hydroxylase/L-ornithine N(5)-oxygenase family. Homotetramer. It depends on FAD as a cofactor.

It catalyses the reaction L-ornithine + NADH + O2 = N(5)-hydroxy-L-ornithine + NAD(+) + H2O. The catalysed reaction is L-ornithine + NADPH + O2 = N(5)-hydroxy-L-ornithine + NADP(+) + H2O. It participates in siderophore biosynthesis. In terms of biological role, L-ornithine N(5)-oxygenase; part of the gene cluster that mediates the biosynthesis of desferriferrichrome that chelates Fe(3+) to form ferrichrome. Fe(3+) is a key factor for induction of trap formation and the fungus uses the iron chelating desferriferrichrome to sequester Fe(3+) to inhibit trap formation and increase nematicidal activity. The biosynthesis of desferriferrichrome requires the action of the L-ornithine N(5)-oxygenase (LOO) Ao414 that hydroxylates L-ornithine at N(5), resulting in the formation of N(5)-hydroxyl-L-ornithine, which is subsequently N-acetylated to yield N(5)-acetyl-N(5)-hydroxy-L-ornithine (L-AHO). L-AHO harbors one hydroxamate moiety, which is the key core responsible for chelating iron. Then, L-AHO is further condensated with glycines to form desferriferrichrome through the NRPS protein Ao415. The chain is L-ornithine N(5)-oxygenase from Arthrobotrys oligospora (strain ATCC 24927 / CBS 115.81 / DSM 1491) (Nematode-trapping fungus).